Reading from the N-terminus, the 307-residue chain is Protoheme IX farnesyltransferase (307 aa).

The next 8 helical transmembrane spans lie at 38–58 (NTLT…LSVL), 65–85 (FFTI…NNYI), 108–128 (PGFA…FLLL), 131–151 (PMAV…YSLW), 158–178 (LNTV…WAAI), 186–206 (IAWM…LALA), 251–271 (LGIT…VLGF), and 287–307 (FVYS…VTFF).

This sequence belongs to the UbiA prenyltransferase family. Protoheme IX farnesyltransferase subfamily. Interacts with CtaA.

It is found in the cell membrane. It catalyses the reaction heme b + (2E,6E)-farnesyl diphosphate + H2O = Fe(II)-heme o + diphosphate. The protein operates within porphyrin-containing compound metabolism; heme O biosynthesis; heme O from protoheme: step 1/1. Its function is as follows. Converts heme B (protoheme IX) to heme O by substitution of the vinyl group on carbon 2 of heme B porphyrin ring with a hydroxyethyl farnesyl side group. The protein is Protoheme IX farnesyltransferase of Bacillus thuringiensis (strain Al Hakam).